The sequence spans 727 residues: Adhesion G protein-coupled receptor L4 (727 aa).

An N-terminal signal peptide occupies residues 1 to 19; the sequence is MKLLLFAAWFSSLLDPCRF. The Extracellular portion of the chain corresponds to 20–467; sequence LDICQSCHPN…LAHYNVLTRI (448 aa). Residues 52-90 enclose the EGF-like 1; calcium-binding domain; that stretch reads DDNECETVPEICGLHANCTNYVGGYYCNCLSGFISNGTE. Cystine bridges form between cysteine 56–cysteine 69, cysteine 63–cysteine 78, cysteine 106–cysteine 118, cysteine 112–cysteine 127, cysteine 408–cysteine 438, and cysteine 426–cysteine 440. An EGF-like 2; calcium-binding domain is found at 102-139; that stretch reads DINECEEDRKCGPNSKCHNNIGSFICSCLRGYTSPAGP. The 175-residue stretch at 282-456 folds into the GAIN-B domain; sequence TQMQVHAGDV…AILMSSARAN (175 aa). The tract at residues 408-456 is GPS; it reads CAFWEYSPSMMGHWSLDGCIRTRVNTTHTSCSCNHLTHFAILMSSARAN. Residues 468-488 traverse the membrane as a helical segment; it reads TQLGMVISLICLSMCIFTFWF. Topologically, residues 489–496 are cytoplasmic; that stretch reads FRDIQNTR. Residues 497–517 form a helical membrane-spanning segment; that stretch reads TTIHKNLCCSLFMAQFIFLIG. Residues 518–535 are Extracellular-facing; that stretch reads INKSAHKWFCSLIAGLLH. A helical membrane pass occupies residues 536–556; the sequence is YFFLAAFAWMCIEGIHLYLIV. Residues 557 to 568 are Cytoplasmic-facing; it reads VGVIYNKGFLHR. The chain crosses the membrane as a helical span at residues 569–589; sequence NFYAFGYGSPAVVVAISATLG. Topologically, residues 590–609 are extracellular; that stretch reads YKYYGTSSVCWLSTENNFIW. A helical membrane pass occupies residues 610-630; that stretch reads SFIGPAILIILVNLLAFAVII. Residues 631 to 654 lie on the Cytoplasmic side of the membrane; the sequence is YKVYRHTAVKKPEISHYENIRSCA. Residues 655–675 traverse the membrane as a helical segment; it reads RGAIALLFVLGVTWAFGVMYI. Over 676–682 the chain is Extracellular; it reads LYETTLT. A helical transmembrane segment spans residues 683-703; that stretch reads AYLFTFANVFQGMFIFIFLCV.

Belongs to the G-protein coupled receptor 2 family. Adhesion G-protein coupled receptor (ADGR) subfamily. In terms of assembly, heterodimer of 2 chains generated by proteolytic processing; the large extracellular N-terminal fragment and the membrane-bound C-terminal fragment predominantly remain associated and non-covalently linked. Post-translationally, autoproteolytically processed at the GPS region of the GAIN-B domain; this cleavage modulates receptor activity.

It is found in the cell membrane. In terms of biological role, orphan receptor that plays a role in vessel formation. In Danio rerio (Zebrafish), this protein is Adhesion G protein-coupled receptor L4.